The sequence spans 32 residues: MSDIN-like toxin proprotein 3 (32 aa).

Positions 1 to 10 are excised as a propeptide; that stretch reads MSDINATRLP. A cross-link (cyclopeptide (Val-Pro)) is located at residues 11-17; it reads VWIGYSP. Positions 18–32 are excised as a propeptide; sequence CVGDDAVALLNRGEG.

It belongs to the MSDIN fungal toxin family. Post-translationally, processed by the macrocyclase-peptidase enzyme POPB to yield a toxic cyclic heptapeptide. POPB first removes 10 residues from the N-terminus. Conformational trapping of the remaining peptide forces the enzyme to release this intermediate rather than proceed to macrocyclization. The enzyme rebinds the remaining peptide in a different conformation and catalyzes macrocyclization of the N-terminal 7 residues.

In terms of biological role, probable toxin that belongs to the MSDIN-like toxin family responsible for a large number of food poisoning cases and deaths. This Amanita fuligineoides protein is MSDIN-like toxin proprotein 3.